Consider the following 355-residue polypeptide: MHC class I-like protein MILL2 (355 aa).

The first 29 residues, 1–29, serve as a signal peptide directing secretion; sequence MKASSGKPREFRPAVLLLILGLLLRDSRG. The interval 46–137 is alpha-1; it reads RLTRTHTLRY…VINQKSQEEG (92 aa). 3 cysteine pairs are disulfide-bonded: Cys96/Cys107, Cys147/Cys210, and Cys249/Cys306. N-linked (GlcNAc...) asparagine glycans are attached at residues Asn104 and Asn152. Positions 138 to 229 are alpha-2; the sequence is LHTLQATLGC…SLRNGLQDTG (92 aa). The segment at 230–323 is alpha-3; it reads PPMVTVTCRN…SIMQTAVSGH (94 aa). The region spanning 231-321 is the Ig-like C1-type domain; that stretch reads PMVTVTCRNY…NHSIMQTAVS (91 aa). An N-linked (GlcNAc...) asparagine glycan is attached at Asn312. A connecting peptide region spans residues 324–329; sequence AAEDSQ. Asp330 is lipidated: GPI-anchor amidated aspartate. Positions 331 to 355 are cleaved as a propeptide — removed in mature form; the sequence is VASSATASAGSALPVVLAVALARAN.

This sequence belongs to the MHC class I family. Heterodimer with B2M (beta-2-microglobulin). N-glycosylated. As to expression, ubiquitously expressed in neonatal and adult tissues.

Its subcellular location is the cell membrane. Its function is as follows. Binds to heparan sulfate proteoglycans on the surface of fibroblast (NIH-3T3) cells. The protein is MHC class I-like protein MILL2 of Mus musculus (Mouse).